Reading from the N-terminus, the 319-residue chain is Phosphoenolpyruvate transferase (319 aa).

Aspartate 50 is a binding site for 7,8-didemethyl-8-hydroxy-5-deazariboflavin.

This sequence belongs to the CofD family. Homodimer. Requires Mg(2+) as cofactor.

The enzyme catalyses enolpyruvoyl-2-diphospho-5'-guanosine + 7,8-didemethyl-8-hydroxy-5-deazariboflavin = dehydro coenzyme F420-0 + GMP + H(+). It participates in cofactor biosynthesis; coenzyme F420 biosynthesis. Functionally, catalyzes the transfer of the phosphoenolpyruvate moiety from enoylpyruvoyl-2-diphospho-5'-guanosine (EPPG) to 7,8-didemethyl-8-hydroxy-5-deazariboflavin (FO) with the formation of dehydro coenzyme F420-0 and GMP. The polypeptide is Phosphoenolpyruvate transferase (Streptomyces avermitilis (strain ATCC 31267 / DSM 46492 / JCM 5070 / NBRC 14893 / NCIMB 12804 / NRRL 8165 / MA-4680)).